The sequence spans 102 residues: Anti-lipopolysaccharide factor (102 aa).

Cys-32 and Cys-53 are joined by a disulfide.

Its function is as follows. Binds tightly to LPS and thus specifically inhibits the LPS-mediated activation of the hemolymph coagulation. It has a strong antibacterial effect especially on the growth of Gram-negative bacteria. In Tachypleus tridentatus (Japanese horseshoe crab), this protein is Anti-lipopolysaccharide factor.